Here is a 152-residue protein sequence, read N- to C-terminus: 6,7-dimethyl-8-ribityllumazine synthase (152 aa).

5-amino-6-(D-ribitylamino)uracil is bound by residues Phe24, 56-58 (SFE), and 80-82 (VVV). (2S)-2-hydroxy-3-oxobutyl phosphate is bound at residue 85-86 (ET). The active-site Proton donor is His88. Phe113 serves as a coordination point for 5-amino-6-(D-ribitylamino)uracil. Arg127 contributes to the (2S)-2-hydroxy-3-oxobutyl phosphate binding site.

It belongs to the DMRL synthase family.

It catalyses the reaction (2S)-2-hydroxy-3-oxobutyl phosphate + 5-amino-6-(D-ribitylamino)uracil = 6,7-dimethyl-8-(1-D-ribityl)lumazine + phosphate + 2 H2O + H(+). The protein operates within cofactor biosynthesis; riboflavin biosynthesis; riboflavin from 2-hydroxy-3-oxobutyl phosphate and 5-amino-6-(D-ribitylamino)uracil: step 1/2. In terms of biological role, catalyzes the formation of 6,7-dimethyl-8-ribityllumazine by condensation of 5-amino-6-(D-ribitylamino)uracil with 3,4-dihydroxy-2-butanone 4-phosphate. This is the penultimate step in the biosynthesis of riboflavin. In Thermococcus onnurineus (strain NA1), this protein is 6,7-dimethyl-8-ribityllumazine synthase.